The sequence spans 323 residues: tRNA dimethylallyltransferase (323 aa).

12–19 lines the ATP pocket; it reads GPTAAGKT. Residue 14 to 19 participates in substrate binding; that stretch reads TAAGKT. Interaction with substrate tRNA regions lie at residues 37–40 and 161–165; these read DSAL and QRLIR.

Belongs to the IPP transferase family. Monomer. The cofactor is Mg(2+).

The enzyme catalyses adenosine(37) in tRNA + dimethylallyl diphosphate = N(6)-dimethylallyladenosine(37) in tRNA + diphosphate. Its function is as follows. Catalyzes the transfer of a dimethylallyl group onto the adenine at position 37 in tRNAs that read codons beginning with uridine, leading to the formation of N6-(dimethylallyl)adenosine (i(6)A). In Pseudomonas savastanoi pv. phaseolicola (strain 1448A / Race 6) (Pseudomonas syringae pv. phaseolicola (strain 1448A / Race 6)), this protein is tRNA dimethylallyltransferase.